Reading from the N-terminus, the 212-residue chain is Adenylate kinase (212 aa).

Residue 10–15 coordinates ATP; it reads GAGKGT. Positions 30–59 are NMP; that stretch reads STGDMFRAAMANQTEMGRLAKSYIDKGELV. AMP contacts are provided by residues Thr-31, Arg-36, 57–59, 86–89, and Gln-93; these read ELV and GYPR. The LID stretch occupies residues 127-159; that stretch reads GRIINRKTGETFHKVFNPPVDYKEEDYYQREDD. ATP is bound by residues Arg-128 and 137–138; that span reads TF. Residues Arg-156 and Arg-167 each coordinate AMP. Gln-195 provides a ligand contact to ATP.

In terms of assembly, monomer.

It is found in the cytoplasm. It carries out the reaction AMP + ATP = 2 ADP. It functions in the pathway purine metabolism; AMP biosynthesis via salvage pathway; AMP from ADP: step 1/1. In terms of biological role, catalyzes the reversible transfer of the terminal phosphate group between ATP and AMP. Plays an important role in cellular energy homeostasis and in adenine nucleotide metabolism. The polypeptide is Adenylate kinase (Streptococcus pyogenes serotype M6 (strain ATCC BAA-946 / MGAS10394)).